A 260-amino-acid chain; its full sequence is Ava biosynthesis cluster protein M (260 aa).

A signal peptide spans 1–15 (MKVLVLGLCRTGTSS).

The protein belongs to the cytochrome P450 family.

The protein operates within secondary metabolite biosynthesis. Functionally, part of the cluster that mediates the biosynthesis of a highly modified cyclo-arginine-tryptophan dipeptide (cRW). The first step of the pathway is perfornmed by the arginine-containing cyclodipeptide synthase (RCPDS) avaA that acts as the scaffold-generating enzyme and is responsible for formation of the cyclo-Arg-Trp (cRW) diketopiperazine. AvaB then acts as a multifunctional flavoenzyme that is responsible for generating the cyclo-Arg-formylkynurenine DKP, which can be deformylated by avaC. AvaB then further catalyzes an additional N-oxidation followed by cyclization and dehydration. The next step is an N-acetylation of the guanidine group catalyzed by the arginine N-acetyltransferase avaD. The roles of the additional enzymes identified within the ava cluster still have to be determined. The sequence is that of Ava biosynthesis cluster protein M from Aspergillus versicolor.